Consider the following 761-residue polypeptide: Translation initiation factor IF-2 (761 aa).

Positions 39–179 (DEETLNKAKQ…KVNHQQMPLP (141 aa)) are disordered. A compositionally biased stretch (low complexity) spans 45 to 105 (KAKQAGKPAA…NNQQSQSQGQ (61 aa)). Over residues 106–120 (TKRPSQASNNQSGAA) the composition is skewed to polar residues. The segment covering 142 to 154 (PGSNNRRPGNNQN) has biased composition (low complexity). Over residues 155–168 (RRNHGNRGGKRRPQ) the composition is skewed to basic residues. The region spanning 262-435 (ERPPVVTIMG…EVEEFKANPD (174 aa)) is the tr-type G domain. The G1 stretch occupies residues 271-278 (GHVDHGKT). GTP is bound at residue 271 to 278 (GHVDHGKT). A G2 region spans residues 296–300 (GITQH). Positions 317-320 (DTPG) are G3. GTP-binding positions include 317-321 (DTPGH) and 371-374 (NKID). The segment at 371–374 (NKID) is G4. The G5 stretch occupies residues 407–409 (SAL).

Belongs to the TRAFAC class translation factor GTPase superfamily. Classic translation factor GTPase family. IF-2 subfamily.

The protein resides in the cytoplasm. Functionally, one of the essential components for the initiation of protein synthesis. Protects formylmethionyl-tRNA from spontaneous hydrolysis and promotes its binding to the 30S ribosomal subunits. Also involved in the hydrolysis of GTP during the formation of the 70S ribosomal complex. This chain is Translation initiation factor IF-2, found in Shouchella clausii (strain KSM-K16) (Alkalihalobacillus clausii).